Reading from the N-terminus, the 95-residue chain is uncharacterized protein (95 aa).

This is an uncharacterized protein from Acheta domesticus (House cricket).